The sequence spans 547 residues: Glucocorticoid-induced transcript 1 protein (547 aa).

Low complexity predominate over residues 1–13 (MSTASSSSSSSSS). Disordered regions lie at residues 1-55 (MSTA…APAA) and 72-285 (LLRG…LSNI). Serine 20 is subject to Phosphoserine. Residues 26 to 38 (SAAGSPPAVAAAG) are compositionally biased toward low complexity. The segment covering 39–50 (SGNGAGGGGGVG) has biased composition (gly residues). Phosphoserine is present on residues serine 79, serine 105, serine 107, and serine 108. The segment covering 86-105 (AAAAASLGSLPGPGAARGPS) has biased composition (low complexity). The residue at position 110 (threonine 110) is a Phosphothreonine. The span at 130 to 145 (RSPESHRRSSSPERRS) shows a compositional bias: basic and acidic residues. A compositionally biased stretch (low complexity) spans 162–177 (RTSSTIRRTSSLDTIT). 2 positions are modified to phosphoserine: serine 171 and serine 172. Phosphothreonine occurs at positions 175 and 177. A compositionally biased stretch (basic and acidic residues) spans 187–201 (RDPHVHYPSCMKDKA). Serine 223 carries the phosphoserine modification. A coiled-coil region spans residues 225 to 254 (GSADQLKEQIAKLRQQLQRSKQSSRHSKEK). A compositionally biased stretch (low complexity) spans 236–245 (KLRQQLQRSK). A Phosphoserine modification is found at serine 258. Residues 265–276 (ITISHTQATGSR) are compositionally biased toward polar residues. Threonine 266 bears the Phosphothreonine mark. Residue serine 303 is modified to Phosphoserine. The segment covering 319 to 331 (EVSKPLDIPDGRR) has biased composition (basic and acidic residues). Residues 319–417 (EVSKPLDIPD…KPNNSYMFKR (99 aa)) are disordered. Over residues 339–356 (RSSSTRSIDTQTPSVQER) the composition is skewed to polar residues. Position 343 is a phosphothreonine (threonine 343). The residue at position 345 (serine 345) is a Phosphoserine. Position 350 is a phosphothreonine (threonine 350). Over residues 357 to 369 (SSSCSSHSPCVSP) the composition is skewed to low complexity. Serine 394, serine 398, serine 406, serine 412, and serine 480 each carry phosphoserine. Polar residues predominate over residues 505–520 (SLSDDTSTAGSMEASV). Residues 505 to 530 (SLSDDTSTAGSMEASVQQPSQQQQLL) form a disordered region. Low complexity predominate over residues 521–530 (QQPSQQQQLL).

Predominantly expressed in lung, spleen, thymus and testis and, at lower levels, in brain, bone marrow, peripheral leukocytes, skin and trachea.

The chain is Glucocorticoid-induced transcript 1 protein (GLCCI1) from Homo sapiens (Human).